Consider the following 194-residue polypeptide: ATP-dependent Clp protease proteolytic subunit (194 aa).

The active-site Nucleophile is Ser99. His124 is a catalytic residue.

Belongs to the peptidase S14 family. Fourteen ClpP subunits assemble into 2 heptameric rings which stack back to back to give a disk-like structure with a central cavity, resembling the structure of eukaryotic proteasomes.

The protein resides in the cytoplasm. The enzyme catalyses Hydrolysis of proteins to small peptides in the presence of ATP and magnesium. alpha-casein is the usual test substrate. In the absence of ATP, only oligopeptides shorter than five residues are hydrolyzed (such as succinyl-Leu-Tyr-|-NHMec, and Leu-Tyr-Leu-|-Tyr-Trp, in which cleavage of the -Tyr-|-Leu- and -Tyr-|-Trp bonds also occurs).. Its function is as follows. Cleaves peptides in various proteins in a process that requires ATP hydrolysis. Has a chymotrypsin-like activity. Plays a major role in the degradation of misfolded proteins. The sequence is that of ATP-dependent Clp protease proteolytic subunit from Clostridium perfringens (strain ATCC 13124 / DSM 756 / JCM 1290 / NCIMB 6125 / NCTC 8237 / Type A).